Here is a 228-residue protein sequence, read N- to C-terminus: Cutinase (228 aa).

A signal peptide spans 1–16 (MKFLSIISLAVSLVAA). Residues cysteine 49 and cysteine 129 are joined by a disulfide bond. Serine 140 acts as the Nucleophile in catalysis. Cysteine 191 and cysteine 198 are oxidised to a cystine. Aspartate 195 is an active-site residue. The active-site Proton donor/acceptor is the histidine 208.

This sequence belongs to the cutinase family. Post-translationally, the 2 disulfide bonds play a critical role in holding the catalytic residues in juxta-position; reduction of the disulfide bridges results in the complete inactivation of the enzyme.

It localises to the secreted. It carries out the reaction cutin + H2O = cutin monomers.. Partially inhibited by berberine; higher inhibitory effects are observed with longer chain polyester substrates. Functionally, catalyzes the hydrolysis of complex carboxylic polyesters found in the cell wall of plants. Degrades cutin, a macromolecule that forms the structure of the plant cuticle. Allows pathogenic fungi to penetrate through the cuticular barrier into the host plant during the initial stage of fungal infection. The protein is Cutinase (CUTA) of Colletotrichum truncatum (Anthracnose fungus).